We begin with the raw amino-acid sequence, 719 residues long: Acyl-coenzyme A oxidase (719 aa).

A Microbody targeting signal motif is present at residues 716-719 (APKI).

The protein belongs to the acyl-CoA oxidase family. FAD is required as a cofactor.

Its subcellular location is the peroxisome. The catalysed reaction is a 2,3-saturated acyl-CoA + O2 = a (2E)-enoyl-CoA + H2O2. The protein operates within lipid metabolism; peroxisomal fatty acid beta-oxidation. The sequence is that of Acyl-coenzyme A oxidase (POX1) from Komagataella pastoris (Yeast).